A 948-amino-acid chain; its full sequence is Valine--tRNA ligase (948 aa).

The short motif at 40–50 is the 'HIGH' region element; that stretch reads PNVTGSLHMGH. The short motif at 551–555 is the 'KMSKS' region element; that stretch reads KMSKS. An ATP-binding site is contributed by lysine 554. Residues 879–945 are a coiled coil; that stretch reads LIDKGAELAR…GKLAEQHARI (67 aa).

Belongs to the class-I aminoacyl-tRNA synthetase family. ValS type 1 subfamily. Monomer.

The protein resides in the cytoplasm. It carries out the reaction tRNA(Val) + L-valine + ATP = L-valyl-tRNA(Val) + AMP + diphosphate. In terms of biological role, catalyzes the attachment of valine to tRNA(Val). As ValRS can inadvertently accommodate and process structurally similar amino acids such as threonine, to avoid such errors, it has a 'posttransfer' editing activity that hydrolyzes mischarged Thr-tRNA(Val) in a tRNA-dependent manner. The polypeptide is Valine--tRNA ligase (Pseudomonas syringae pv. syringae (strain B728a)).